A 156-amino-acid chain; its full sequence is Cyclic pyranopterin monophosphate synthase (156 aa).

Substrate contacts are provided by residues 73–75 (LCH) and 110–111 (ME). Residue Asp125 is part of the active site.

Belongs to the MoaC family. Homohexamer; trimer of dimers.

It catalyses the reaction (8S)-3',8-cyclo-7,8-dihydroguanosine 5'-triphosphate = cyclic pyranopterin phosphate + diphosphate. It functions in the pathway cofactor biosynthesis; molybdopterin biosynthesis. Its function is as follows. Catalyzes the conversion of (8S)-3',8-cyclo-7,8-dihydroguanosine 5'-triphosphate to cyclic pyranopterin monophosphate (cPMP). In Pseudomonas putida (strain GB-1), this protein is Cyclic pyranopterin monophosphate synthase.